Consider the following 180-residue polypeptide: UPF0227 protein YcfP (180 aa).

Belongs to the UPF0227 family.

This Salmonella agona (strain SL483) protein is UPF0227 protein YcfP.